The sequence spans 320 residues: Ribosomal large subunit pseudouridine synthase C (320 aa).

Residues 20 to 83 (QRIDNFLLAK…AEREEVQVSA (64 aa)) form the S4 RNA-binding domain. Asp144 is an active-site residue.

Belongs to the pseudouridine synthase RluA family.

It catalyses the reaction uridine(955/2504/2580) in 23S rRNA = pseudouridine(955/2504/2580) in 23S rRNA. Its function is as follows. Responsible for synthesis of pseudouridine from uracil at positions 955, 2504 and 2580 in 23S ribosomal RNA. In Yersinia pestis, this protein is Ribosomal large subunit pseudouridine synthase C (rluC).